The sequence spans 293 residues: Probable 2-(5''-triphosphoribosyl)-3'-dephosphocoenzyme-A synthase (293 aa).

This sequence belongs to the CitG/MdcB family.

It carries out the reaction 3'-dephospho-CoA + ATP = 2'-(5''-triphospho-alpha-D-ribosyl)-3'-dephospho-CoA + adenine. Involved in the formation of 2-(5''-phosphoribosyl)-3'-dephosphocoenzyme-A, the prosthetic group of the acyl-carrier protein of the malonate decarboxylase. The protein is Probable 2-(5''-triphosphoribosyl)-3'-dephosphocoenzyme-A synthase of Pseudomonas paraeruginosa (strain DSM 24068 / PA7) (Pseudomonas aeruginosa (strain PA7)).